A 370-amino-acid chain; its full sequence is ATP synthase gamma chain, chloroplastic (370 aa).

A chloroplast-targeting transit peptide spans 1-55 (MKFFCVAGLLASAAAFQAQPAAFTTYSPAVGGATSNVFSESSSPAHRNRRATIVM). Residue cysteine 145 is part of the active site.

This sequence belongs to the ATPase gamma chain family. In terms of assembly, F-type ATPases have 2 components, CF(1) - the catalytic core - and CF(0) - the membrane proton channel. CF(1) has five subunits: alpha(3), beta(3), gamma(1), delta(1), epsilon(1). CF(0) has four main subunits: a, b, b' and c.

It localises to the plastid. Its subcellular location is the chloroplast thylakoid membrane. In terms of biological role, produces ATP from ADP in the presence of a proton gradient across the membrane. The gamma chain is believed to be important in regulating ATPase activity and the flow of protons through the CF(0) complex. This Trieres chinensis (Marine centric diatom) protein is ATP synthase gamma chain, chloroplastic (ATPC).